A 265-amino-acid polypeptide reads, in one-letter code: Endochitinase At2g43580 (265 aa).

A signal peptide spans 1 to 24 (MALTKIFLILLLSLLGLYSETVKS). Positions 25-59 (QNCDCAPNLCCSQFGYCGTTADYCGSTCQSGPCRV) constitute a Chitin-binding type-1 domain. 4 cysteine pairs are disulfide-bonded: Cys-27-Cys-35, Cys-29-Cys-41, Cys-34-Cys-48, and Cys-52-Cys-57. Residues 67-265 (GLVGNIVTQI…GLDPGANITC (199 aa)) form a catalytic region. N-linked (GlcNAc...) asparagine glycosylation occurs at Asn-102. The active-site Proton donor is Glu-129. A glycan (N-linked (GlcNAc...) asparagine) is linked at Asn-262.

The protein belongs to the glycosyl hydrolase 19 family. Chitinase class I subfamily.

The catalysed reaction is Random endo-hydrolysis of N-acetyl-beta-D-glucosaminide (1-&gt;4)-beta-linkages in chitin and chitodextrins.. This Arabidopsis thaliana (Mouse-ear cress) protein is Endochitinase At2g43580.